A 356-amino-acid chain; its full sequence is Glycerol-3-phosphate dehydrogenase [NAD(P)+] (356 aa).

The NADPH site is built by Trp-12, Arg-32, Arg-33, and Lys-117. Sn-glycerol 3-phosphate is bound by residues Lys-117, Gly-151, and Ser-153. Residue Ala-155 coordinates NADPH. 4 residues coordinate sn-glycerol 3-phosphate: Lys-206, Asp-265, Arg-276, and Asn-277. Lys-206 functions as the Proton acceptor in the catalytic mechanism. Arg-276 provides a ligand contact to NADPH. NADPH is bound by residues Leu-309 and Glu-311.

The protein belongs to the NAD-dependent glycerol-3-phosphate dehydrogenase family.

It localises to the cytoplasm. It carries out the reaction sn-glycerol 3-phosphate + NAD(+) = dihydroxyacetone phosphate + NADH + H(+). The enzyme catalyses sn-glycerol 3-phosphate + NADP(+) = dihydroxyacetone phosphate + NADPH + H(+). Its pathway is membrane lipid metabolism; glycerophospholipid metabolism. Catalyzes the reduction of the glycolytic intermediate dihydroxyacetone phosphate (DHAP) to sn-glycerol 3-phosphate (G3P), the key precursor for phospholipid synthesis. This Treponema pallidum (strain Nichols) protein is Glycerol-3-phosphate dehydrogenase [NAD(P)+].